Consider the following 607-residue polypeptide: Elongation factor 4 (607 aa).

A tr-type G domain is found at 11-193 (SRIRNFSIIA…QVVEKVPAPA (183 aa)). GTP is bound by residues 23–28 (DHGKST) and 140–143 (NKID).

Belongs to the TRAFAC class translation factor GTPase superfamily. Classic translation factor GTPase family. LepA subfamily.

It is found in the cell membrane. The catalysed reaction is GTP + H2O = GDP + phosphate + H(+). Required for accurate and efficient protein synthesis under certain stress conditions. May act as a fidelity factor of the translation reaction, by catalyzing a one-codon backward translocation of tRNAs on improperly translocated ribosomes. Back-translocation proceeds from a post-translocation (POST) complex to a pre-translocation (PRE) complex, thus giving elongation factor G a second chance to translocate the tRNAs correctly. Binds to ribosomes in a GTP-dependent manner. The polypeptide is Elongation factor 4 (Shouchella clausii (strain KSM-K16) (Alkalihalobacillus clausii)).